Here is a 394-residue protein sequence, read N- to C-terminus: S-adenosylmethionine synthase (394 aa).

Position 18 (H18) interacts with ATP. D20 provides a ligand contact to Mg(2+). E46 contacts K(+). Residues E59 and Q104 each coordinate L-methionine. Residues 104 to 114 (QSPDIAQGVDA) are flexible loop. ATP contacts are provided by residues 174–176 (DCK), 240–241 (KF), D249, 255–256 (RK), A272, and K276. Residue D249 participates in L-methionine binding. K280 contacts L-methionine.

It belongs to the AdoMet synthase family. In terms of assembly, homotetramer; dimer of dimers. The cofactor is Mg(2+). Requires K(+) as cofactor.

The protein localises to the cytoplasm. It catalyses the reaction L-methionine + ATP + H2O = S-adenosyl-L-methionine + phosphate + diphosphate. Its pathway is amino-acid biosynthesis; S-adenosyl-L-methionine biosynthesis; S-adenosyl-L-methionine from L-methionine: step 1/1. Its function is as follows. Catalyzes the formation of S-adenosylmethionine (AdoMet) from methionine and ATP. The overall synthetic reaction is composed of two sequential steps, AdoMet formation and the subsequent tripolyphosphate hydrolysis which occurs prior to release of AdoMet from the enzyme. The chain is S-adenosylmethionine synthase from Akkermansia muciniphila (strain ATCC BAA-835 / DSM 22959 / JCM 33894 / BCRC 81048 / CCUG 64013 / CIP 107961 / Muc).